Consider the following 479-residue polypeptide: GTPase Der (479 aa).

2 EngA-type G domains span residues 3–167 (FTLA…EAAA) and 191–366 (LQIA…ATWN). Residues 9-16 (GRPNVGKS), 56-60 (DTAGL), 119-122 (NKAE), 197-204 (GRPNAGKS), 244-248 (DTAGM), and 309-312 (NKWD) contribute to the GTP site. One can recognise a KH-like domain in the interval 367 to 453 (TRISTARLNQ…RLWMRSQADD (87 aa)). A disordered region spans residues 449–479 (SQADDNPYKNRKKSTPSRLNKHVRKGETKKG). Positions 457–472 (KNRKKSTPSRLNKHVR) are enriched in basic residues.

It belongs to the TRAFAC class TrmE-Era-EngA-EngB-Septin-like GTPase superfamily. EngA (Der) GTPase family. In terms of assembly, associates with the 50S ribosomal subunit.

In terms of biological role, GTPase that plays an essential role in the late steps of ribosome biogenesis. The sequence is that of GTPase Der from Jannaschia sp. (strain CCS1).